A 41-amino-acid polypeptide reads, in one-letter code: GMGIGINLPPCIKNGEYCNPWTGSIILGGACCGTCTDYECH.

3 disulfides stabilise this stretch: Cys11-Cys32, Cys18-Cys35, and Cys31-Cys40.

Expressed by the venom duct.

It localises to the secreted. This Hastula hectica (Sea snail) protein is Augerpeptide hhe6.1.